We begin with the raw amino-acid sequence, 199 residues long: Urease accessory protein UreG (199 aa).

Position 8 to 15 (8 to 15 (GPVGSGKT)) interacts with GTP.

Belongs to the SIMIBI class G3E GTPase family. UreG subfamily. Homodimer. UreH, UreF and UreG form a complex that acts as a GTP-hydrolysis-dependent molecular chaperone, activating the urease apoprotein by helping to assemble the nickel containing metallocenter of UreC. The UreE protein probably delivers the nickel.

The protein localises to the cytoplasm. Functionally, facilitates the functional incorporation of the urease nickel metallocenter. This process requires GTP hydrolysis, probably effectuated by UreG. In Helicobacter acinonychis (strain Sheeba), this protein is Urease accessory protein UreG.